Here is a 223-residue protein sequence, read N- to C-terminus: MNRIIPPENLPELLERAHMMAGVSLAQIAAQRGLSVPKDLKRDKGWVGQLIEMELGATAGSKPEQDFLHLGVELKTIPIDSQGRPLETTYVCVAPLSNIQGLTWQNSLVSHKLQRVLWVPVEGERHIPVGERRIGTPILWEPDPQELQLLQQDWEEIMELIALGKVEKLTARHGEVLQLRPKAANSKALTQSIAEDGSLKMTNPRGFYLKTSFTAMILNKVFG.

Belongs to the MutH family.

It localises to the cytoplasm. Functionally, sequence-specific endonuclease that cleaves unmethylated GATC sequences. It is involved in DNA mismatch repair. This is DNA mismatch repair protein MutH from Shewanella baltica (strain OS223).